We begin with the raw amino-acid sequence, 341 residues long: Hyaluronidase A (341 aa).

Residues Asn-3, Asn-68, and Asn-83 are each glycosylated (N-linked (GlcNAc...) asparagine). 2 disulfide bridges follow: Cys-23/Cys-311 and Cys-189/Cys-201.

It belongs to the glycosyl hydrolase 56 family. As to expression, expressed by the venom gland.

Its subcellular location is the secreted. It catalyses the reaction Random hydrolysis of (1-&gt;4)-linkages between N-acetyl-beta-D-glucosamine and D-glucuronate residues in hyaluronate.. Its function is as follows. May hydrolyze high molecular weight hyaluronic acid to produce small oligosaccharides. The sequence is that of Hyaluronidase A from Vespa velutina (Asian yellow-legged hornet).